We begin with the raw amino-acid sequence, 570 residues long: Glucan 1,3-beta-glucosidase 2 (570 aa).

N91, N116, N121, N184, N203, and N248 each carry an N-linked (GlcNAc...) asparagine glycan. Catalysis depends on E338, which acts as the Proton donor. N-linked (GlcNAc...) asparagine glycosylation occurs at N364. The active-site Nucleophile is the E439. N-linked (GlcNAc...) asparagine glycans are attached at residues N525 and N552.

It belongs to the glycosyl hydrolase 5 (cellulase A) family.

The protein resides in the secreted. It carries out the reaction Successive hydrolysis of beta-D-glucose units from the non-reducing ends of (1-&gt;3)-beta-D-glucans, releasing alpha-glucose.. The sequence is that of Glucan 1,3-beta-glucosidase 2 (exg2) from Schizosaccharomyces pombe (strain 972 / ATCC 24843) (Fission yeast).